A 73-amino-acid chain; its full sequence is Mucroporin-like peptide (73 aa).

An N-terminal signal peptide occupies residues 1 to 22 (MKVKCLLAVFLIVLIAAEHCQA). Lys38 bears the Lysine amide mark. The propeptide occupies 44-73 (ELGTQFQPRQKNFMRREVDLERLFAEMPDY).

Belongs to the non-disulfide-bridged peptide (NDBP) superfamily. Short antimicrobial peptide (group 4) family. As to expression, expressed by the venom gland.

The protein localises to the secreted. The protein resides in the target cell membrane. In terms of biological role, cationic host defense peptide that have antibacterial activity by breaking membranes. Is more effective on Gram-positive than on Gram-negative bacteria. This is Mucroporin-like peptide from Lychas mucronatus (Chinese swimming scorpion).